The sequence spans 365 residues: 3-dehydroquinate synthase (365 aa).

Residues 106–110 (GVIGD), 130–131 (TT), lysine 142, lysine 151, and 169–172 (FFAT) contribute to the NAD(+) site. Residues glutamate 184, histidine 247, and histidine 264 each coordinate Zn(2+).

The protein belongs to the sugar phosphate cyclases superfamily. Dehydroquinate synthase family. The cofactor is NAD(+). It depends on Co(2+) as a cofactor. Zn(2+) serves as cofactor.

It is found in the cytoplasm. The catalysed reaction is 7-phospho-2-dehydro-3-deoxy-D-arabino-heptonate = 3-dehydroquinate + phosphate. Its pathway is metabolic intermediate biosynthesis; chorismate biosynthesis; chorismate from D-erythrose 4-phosphate and phosphoenolpyruvate: step 2/7. Its function is as follows. Catalyzes the conversion of 3-deoxy-D-arabino-heptulosonate 7-phosphate (DAHP) to dehydroquinate (DHQ). The polypeptide is 3-dehydroquinate synthase (Listeria monocytogenes serotype 4b (strain F2365)).